We begin with the raw amino-acid sequence, 578 residues long: Adenine deaminase (578 aa).

The protein belongs to the metallo-dependent hydrolases superfamily. Adenine deaminase family. It depends on Mn(2+) as a cofactor.

It carries out the reaction adenine + H2O + H(+) = hypoxanthine + NH4(+). This is Adenine deaminase from Ligilactobacillus salivarius (strain UCC118) (Lactobacillus salivarius).